Here is a 345-residue protein sequence, read N- to C-terminus: uncharacterized protein (345 aa).

2 consecutive PDZ GRASP-type domains span residues 27 to 112 and 118 to 207; these read CGFR…WASI and AIWH…HGVL. A GRASP region spans residues 27-223; the sequence is CGFRVLKVEN…LSGPPPQPGD (197 aa). The segment at 229-345 is disordered; the sequence is PMLGGPDHKV…APQNEELVKN (117 aa). A compositionally biased stretch (basic and acidic residues) spans 297–308; the sequence is KLSRELDHKTKD. Composition is skewed to polar residues over residues 309-318 and 328-338; these read ASSTNDSQTT and VNSTNDESAPQ.

The protein resides in the golgi apparatus membrane. This is an uncharacterized protein from Schizosaccharomyces pombe (strain 972 / ATCC 24843) (Fission yeast).